The sequence spans 76 residues: DNA-directed RNA polymerase subunit epsilon (76 aa).

It belongs to the RNA polymerase subunit epsilon family. RNAP is composed of a core of 2 alpha, a beta and a beta' subunit. The core is associated with a delta subunit, and at least one of epsilon or omega. When a sigma factor is associated with the core the holoenzyme is formed, which can initiate transcription.

It catalyses the reaction RNA(n) + a ribonucleoside 5'-triphosphate = RNA(n+1) + diphosphate. Its function is as follows. A non-essential component of RNA polymerase (RNAP). This chain is DNA-directed RNA polymerase subunit epsilon, found in Streptococcus equi subsp. zooepidemicus (strain H70).